A 379-amino-acid chain; its full sequence is Alcohol dehydrogenase 1 (379 aa).

Residues Cys47, Thr49, His69, Cys99, Cys102, Cys105, Cys113, and Cys177 each contribute to the Zn(2+) site. The an alcohol site is built by Thr49 and His69. Position 49 (Thr49) interacts with NAD(+). NAD(+) contacts are provided by residues 202–207, Asp226, Arg231, Thr272, Val295, 295–297, Phe322, and Arg372; these read GLGAVG and VGV.

It belongs to the zinc-containing alcohol dehydrogenase family. In terms of assembly, homodimer. Zn(2+) is required as a cofactor.

The protein resides in the cytoplasm. It carries out the reaction a primary alcohol + NAD(+) = an aldehyde + NADH + H(+). The catalysed reaction is a secondary alcohol + NAD(+) = a ketone + NADH + H(+). This Zea mays (Maize) protein is Alcohol dehydrogenase 1 (ADH1).